We begin with the raw amino-acid sequence, 301 residues long: Ribonuclease HIII (301 aa).

Residues 88-301 (WSVLGSDEVG…TQKARQLARQ (214 aa)) form the RNase H type-2 domain. Positions 94, 95, and 197 each coordinate a divalent metal cation.

The protein belongs to the RNase HII family. RnhC subfamily. It depends on Mn(2+) as a cofactor. The cofactor is Mg(2+).

Its subcellular location is the cytoplasm. The enzyme catalyses Endonucleolytic cleavage to 5'-phosphomonoester.. Functionally, endonuclease that specifically degrades the RNA of RNA-DNA hybrids. In Limosilactobacillus fermentum (strain NBRC 3956 / LMG 18251) (Lactobacillus fermentum), this protein is Ribonuclease HIII.